The primary structure comprises 109 residues: Small ribosomal subunit protein bS20 (109 aa).

The protein belongs to the bacterial ribosomal protein bS20 family.

Its function is as follows. Binds directly to 16S ribosomal RNA. In Synechococcus sp. (strain JA-2-3B'a(2-13)) (Cyanobacteria bacterium Yellowstone B-Prime), this protein is Small ribosomal subunit protein bS20.